We begin with the raw amino-acid sequence, 354 residues long: Ferrochelatase (354 aa).

Histidine 204 and glutamate 306 together coordinate Fe cation.

The protein belongs to the ferrochelatase family.

It is found in the cytoplasm. It catalyses the reaction heme b + 2 H(+) = protoporphyrin IX + Fe(2+). Its pathway is porphyrin-containing compound metabolism; protoheme biosynthesis; protoheme from protoporphyrin-IX: step 1/1. Functionally, catalyzes the ferrous insertion into protoporphyrin IX. This is Ferrochelatase from Coxiella burnetii (strain CbuK_Q154) (Coxiella burnetii (strain Q154)).